Here is a 508-residue protein sequence, read N- to C-terminus: Kinesin light chain 3 (508 aa).

Residues 1–20 form a disordered region; it reads MSVQVAAPGSTGLGPERLNP. Residues 88-150 adopt a coiled-coil conformation; that stretch reads LLALSAHVSV…EEEKSHLQFL (63 aa). Residues 154–197 are disordered; that stretch reads RQYDPPEESQRPESPPRRDSLASLFPSEEEEKKGPEAAGAAAAQ. The segment covering 161-173 has biased composition (basic and acidic residues); the sequence is ESQRPESPPRRDS. Phosphoserine is present on Ser-173. 5 TPR repeats span residues 207-240, 249-282, 291-324, 333-366, and 375-408; these read LRTL…LERS, ATML…REQT, AATL…REKV, AKQL…YEAL, and AKTK…EALP. The segment at 409-441 is disordered; the sequence is APLGAPQGGTAGDTQQQVLRRSSSFSKLRESIR. A compositionally biased stretch (polar residues) spans 420 to 434; that stretch reads GDTQQQVLRRSSSFS. A Phosphoserine modification is found at Ser-467. Positions 486-508 are disordered; sequence LSTRHLSEAPRTLSISTQDLSPR. A compositionally biased stretch (polar residues) spans 498–508; sequence LSISTQDLSPR. Position 502 is a phosphothreonine (Thr-502). Ser-506 bears the Phosphoserine mark.

The protein belongs to the kinesin light chain family. In terms of assembly, oligomer composed of two heavy chains and two light chains. Associates with microtubulin in an ATP-dependent manner. Interacts with KIF5C. Interacts with ODF1. Interacts with LRGUK. Interacts with VDAC2. As to expression, expressed in postmeiotic male germ cells (at protein level). Expressed in the testes (at protein level). Expressed in spleen, intestine, brain and ovary.

It localises to the cytoplasm. It is found in the cytoskeleton. The protein resides in the mitochondrion. Its function is as follows. Kinesin is a microtubule-associated force-producing protein that may play a role in organelle transport. Plays a role during spermiogenesis in the development of the sperm tail midpiece and in the normal function of spermatozoa. May play a role in the formation of the mitochondrial sheath formation in the developing spermatid midpiece. This is Kinesin light chain 3 (Klc3) from Mus musculus (Mouse).